Consider the following 244-residue polypeptide: Nodulation protein G (244 aa).

11–35 is an NAD(+) binding site; sequence VTGASGAIGGAIARVLHAQGAIVGL. S139 contributes to the substrate binding site. The active-site Proton acceptor is Y152.

It belongs to the short-chain dehydrogenases/reductases (SDR) family.

Its function is as follows. Proposed to modify Nod factor fatty acyl chain. The chain is Nodulation protein G (nodG) from Rhizobium meliloti (Ensifer meliloti).